Here is a 91-residue protein sequence, read N- to C-terminus: Small ribosomal subunit protein bS18 (91 aa).

This sequence belongs to the bacterial ribosomal protein bS18 family. Part of the 30S ribosomal subunit. Forms a tight heterodimer with protein bS6.

Binds as a heterodimer with protein bS6 to the central domain of the 16S rRNA, where it helps stabilize the platform of the 30S subunit. The sequence is that of Small ribosomal subunit protein bS18 from Paraburkholderia phytofirmans (strain DSM 17436 / LMG 22146 / PsJN) (Burkholderia phytofirmans).